A 121-amino-acid chain; its full sequence is MKLDMKQPRKQRKFLYNAPLHLRGKIMSAPLSKELREKYGVRNLPIRVGDKVKVMRGDFKGVEGKVVEVDLRRYRIHVEGVTHKKTDGTEVFYPLHPSNVMIVELNLEDEKREKIIERRAA.

It belongs to the universal ribosomal protein uL24 family. Part of the 50S ribosomal subunit.

Functionally, one of two assembly initiator proteins, it binds directly to the 5'-end of the 23S rRNA, where it nucleates assembly of the 50S subunit. Located at the polypeptide exit tunnel on the outside of the subunit. The protein is Large ribosomal subunit protein uL24 of Thermococcus kodakarensis (strain ATCC BAA-918 / JCM 12380 / KOD1) (Pyrococcus kodakaraensis (strain KOD1)).